Consider the following 299-residue polypeptide: MFASPVTSTPFSVKDILNLEQHQSGLSPMDITSRLENSSCMLSTFKQESYPGTPCLSELTEEMSQRDTAKGPSSFPGSFFVKNYLEMDSKDPKDHKKDICPLQKTLEHDKREAEDPERPRQRKRRKPRVLFSQAQVYELERRFKQQKYLSAPERDHLANVLKLTSTQVKIWFQNRRYKCKRQRQDQTLEMVGLPPPRRIAVPVLVRDGKPCLGESSPYNSPYNVSINPYSYNTYPAYSNYSNPACSGSYNCSYSSMPSMQPTSAGNNFMNFSVGDLNTVQTPIQQASSVSALHHGIRAW.

Residues 90–119 (KDPKDHKKDICPLQKTLEHDKREAEDPERP) are compositionally biased toward basic and acidic residues. Residues 90-128 (KDPKDHKKDICPLQKTLEHDKREAEDPERPRQRKRRKPR) form a disordered region. The segment at residues 124 to 183 (RRKPRVLFSQAQVYELERRFKQQKYLSAPERDHLANVLKLTSTQVKIWFQNRRYKCKRQR) is a DNA-binding region (homeobox).

This sequence belongs to the NK-2 homeobox family. As to quaternary structure, homodimer (via the homeobox); binds DNA as homodimer. In terms of tissue distribution, heart and gut tissue.

Its subcellular location is the nucleus. Its function is as follows. Transcription factor required for the development of the heart and the spleen. Implicated in commitment to and/or differentiation of the myocardial lineage. May regulate the expression of genes involved in cardiogenesis and play a role in the formation of gut and the pharyngeal region. Binds to the core DNA motif of promoter. In Xenopus laevis (African clawed frog), this protein is Homeobox protein Nkx-2.5 (nkx-2.5).